A 588-amino-acid chain; its full sequence is Neopullulanase (588 aa).

Residues asparagine 147, asparagine 149, serine 153, glycine 172, and aspartate 174 each contribute to the Ca(2+) site. The substrate site is built by histidine 247 and arginine 326. Aspartate 328 (nucleophile) is an active-site residue. Catalysis depends on glutamate 357, which acts as the Proton donor. Residues histidine 423–aspartate 424, aspartate 468, and arginine 472 each bind substrate.

Belongs to the glycosyl hydrolase 13 family. Homodimer. Ca(2+) serves as cofactor.

It carries out the reaction Hydrolysis of pullulan to panose (6-alpha-D-glucosylmaltose).. In terms of biological role, hydrolyzes pullulan efficiently but only a small amount of starch. Endohydrolysis of 1,4-alpha-glucosidic linkages in pullulan to form panose. Also cleaves (1-6)-alpha-glucosidic linkages to form maltotriose. This is Neopullulanase (nplT) from Geobacillus stearothermophilus (Bacillus stearothermophilus).